The chain runs to 479 residues: Cardiolipin synthase A (479 aa).

2 helical membrane-spanning segments follow: residues 8–28 (IFGYLIALLHFLGLIAAIHAV) and 38–58 (IAWALSLLFMPYLTLIPYLVF). PLD phosphodiesterase domains are found at residues 218-245 (VNFRNHRKIVVVDGMLGFVGGHNVGDEY) and 392-419 (QPGFLHQKVVLIDNEISAIGSANLDNRS). Residues H223, K225, D230, H397, K399, and D404 contribute to the active site.

The protein belongs to the phospholipase D family. Cardiolipin synthase subfamily. ClsA sub-subfamily.

The protein resides in the cell inner membrane. It carries out the reaction 2 a 1,2-diacyl-sn-glycero-3-phospho-(1'-sn-glycerol) = a cardiolipin + glycerol. Catalyzes the reversible phosphatidyl group transfer from one phosphatidylglycerol molecule to another to form cardiolipin (CL) (diphosphatidylglycerol) and glycerol. The polypeptide is Cardiolipin synthase A (Pseudomonas fluorescens (strain ATCC BAA-477 / NRRL B-23932 / Pf-5)).